Consider the following 249-residue polypeptide: Probable phosphoglycerate mutase (249 aa).

Residues 9-16, 22-23, R61, 88-91, K99, 115-116, and 184-185 each bind substrate; these read RHGESTWN, TG, ERMY, RR, and GN. Catalysis depends on H10, which acts as the Tele-phosphohistidine intermediate. E88 functions as the Proton donor/acceptor in the catalytic mechanism.

Belongs to the phosphoglycerate mutase family. BPG-dependent PGAM subfamily. In terms of assembly, homodimer.

It catalyses the reaction (2R)-2-phosphoglycerate = (2R)-3-phosphoglycerate. It carries out the reaction (2R)-3-phospho-glyceroyl phosphate = (2R)-2,3-bisphosphoglycerate + H(+). In terms of biological role, catalyzes the interconversion of 2-phosphoglycerate and 3-phosphoglycerate. The protein is Probable phosphoglycerate mutase (gpmA) of Dictyostelium discoideum (Social amoeba).